Consider the following 291-residue polypeptide: Insulin-like growth factor-binding protein 3 (291 aa).

Residues 1-27 (MQRARPTLWAAALTLLVLLRGPPVARA) form the signal peptide. Residues 28-134 (GASSAGLGPV…AYLLPAPPAP (107 aa)) are IGF-binding. One can recognise an IGFBP N-terminal domain in the interval 36–117 (PVVRCEPCDA…LDGRGLCVNA (82 aa)). Cystine bridges form between C40–C67, C43–C69, C51–C70, C58–C73, C81–C94, and C88–C114. N-linked (GlcNAc...) (complex) asparagine glycans are attached at residues N116 and N136. 2 disordered regions span residues 130-162 (APPA…RVSD) and 189-211 (DYES…TEYG). A compositionally biased stretch (low complexity) spans 146–156 (AGSVESPSVSS). S148 carries the post-translational modification Phosphoserine; by FAM20C. Polar residues predominate over residues 191–202 (ESQSTDTQNFSS). The residue at position 194 (S194) is a Phosphoserine; by CK2. Residue N199 is glycosylated (N-linked (GlcNAc...) (complex) asparagine). S201 carries the post-translational modification Phosphoserine; by FAM20C. At S202 the chain carries Phosphoserine; by CK2. The region spanning 210–285 (YGPCRREMED…TTKGKEDVHC (76 aa)) is the Thyroglobulin type-1 domain. Disulfide bonds link C213–C240, C251–C262, and C264–C285.

Interacts with XLKD1. Binds IGF2 more than IGF1. Forms a ternary complex of about 140 to 150 kDa with IGF1 or IGF2 and a 85 kDa glycoprotein (ALS). Interacts with humanin; humanin competes with importin KPNB1 for binding to IGFBP3, blocking IGFBP3 nuclear import and IGFBP3-mediated apoptosis. Interacts with TMEM219. Interacts with RXRA; this interaction modulates the transcriptional activity of RXRA. Interacts with LRP1; this interaction mediates cell growth inhibition independent of IGF1. In terms of processing, phosphorylated by FAM20C in the extracellular medium. Phosphorylated by CK2; resulting in decreased nuclear localization. In terms of tissue distribution, expressed by most tissues. Present in plasma.

Its subcellular location is the secreted. It is found in the nucleus. Functionally, multifunctional protein that plays a critical role in regulating the availability of IGFs such as IGF1 and IGF2 to their receptors and thereby regulates IGF-mediated cellular processes including proliferation, differentiation, and apoptosis in a cell-type specific manner. Also exhibits IGF-independent antiproliferative and apoptotic effects mediated by its receptor TMEM219/IGFBP-3R. Inhibits the positive effect of humanin on insulin sensitivity. Promotes testicular germ cell apoptosis. Acts via LRP-1/alpha2M receptor, also known as TGF-beta type V receptor, to mediate cell growth inhibition independent of IGF1. Mechanistically, induces serine-specific dephosphorylation of IRS1 or IRS2 upon ligation to its receptor, leading to the inhibitory cascade. In the nucleus, interacts with transcription factors such as retinoid X receptor-alpha/RXRA to regulate transcriptional signaling and apoptosis. The protein is Insulin-like growth factor-binding protein 3 (IGFBP3) of Homo sapiens (Human).